Consider the following 423-residue polypeptide: Probable serine/threonine-protein kinase PBL5 (423 aa).

The interval 1-66 (MGCFGCSKKS…DVNNEGGVGK (66 aa)) is disordered. Gly-2 carries the N-myristoyl glycine lipid modification. The S-palmitoyl cysteine moiety is linked to residue Cys-3. Basic and acidic residues predominate over residues 12 to 22 (KRSETNKDTVI). Over residues 43–52 (TQPSSDSTKV) the composition is skewed to polar residues. Thr-92 carries the phosphothreonine modification. The region spanning 103 to 380 (FRSDCFLGEG…SDVVLALNFL (278 aa)) is the Protein kinase domain. ATP-binding positions include 109–117 (LGEGGFGKV) and Lys-132. The residue at position 177 (Tyr-177) is a Phosphotyrosine. Asp-230 (proton acceptor) is an active-site residue. Phosphoserine occurs at positions 234 and 264. Phosphothreonine occurs at positions 265 and 270. Tyr-278 bears the Phosphotyrosine mark. The segment covering 383–398 (SKYDPNSPSSSSGKNP) has biased composition (low complexity). Residues 383–423 (SKYDPNSPSSSSGKNPSFHRDRDDEEKRPHLVKETECEGSS) are disordered. The span at 400-423 (FHRDRDDEEKRPHLVKETECEGSS) shows a compositional bias: basic and acidic residues.

The protein belongs to the protein kinase superfamily. Ser/Thr protein kinase family. Post-translationally, palmitoylation at Cys-3 and Cys-6 are required for plasma membrane location.

The protein resides in the cell membrane. It carries out the reaction L-seryl-[protein] + ATP = O-phospho-L-seryl-[protein] + ADP + H(+). The catalysed reaction is L-threonyl-[protein] + ATP = O-phospho-L-threonyl-[protein] + ADP + H(+). Its function is as follows. May be involved in plant defense signaling. This is Probable serine/threonine-protein kinase PBL5 from Arabidopsis thaliana (Mouse-ear cress).